We begin with the raw amino-acid sequence, 173 residues long: Nicotinamide-nucleotide adenylyltransferase (173 aa).

It belongs to the archaeal NMN adenylyltransferase family.

It is found in the cytoplasm. The enzyme catalyses beta-nicotinamide D-ribonucleotide + ATP + H(+) = diphosphate + NAD(+). It functions in the pathway cofactor biosynthesis; NAD(+) biosynthesis; NAD(+) from nicotinamide D-ribonucleotide: step 1/1. The polypeptide is Nicotinamide-nucleotide adenylyltransferase (Methanosarcina mazei (strain ATCC BAA-159 / DSM 3647 / Goe1 / Go1 / JCM 11833 / OCM 88) (Methanosarcina frisia)).